A 367-amino-acid chain; its full sequence is UDP-N-acetylglucosamine--N-acetylmuramyl-(pentapeptide) pyrophosphoryl-undecaprenol N-acetylglucosamine transferase (367 aa).

UDP-N-acetyl-alpha-D-glucosamine contacts are provided by residues 13-15, asparagine 125, arginine 165, serine 192, and glutamine 293; that span reads TGG.

The protein belongs to the glycosyltransferase 28 family. MurG subfamily.

The protein resides in the cell inner membrane. It catalyses the reaction di-trans,octa-cis-undecaprenyl diphospho-N-acetyl-alpha-D-muramoyl-L-alanyl-D-glutamyl-meso-2,6-diaminopimeloyl-D-alanyl-D-alanine + UDP-N-acetyl-alpha-D-glucosamine = di-trans,octa-cis-undecaprenyl diphospho-[N-acetyl-alpha-D-glucosaminyl-(1-&gt;4)]-N-acetyl-alpha-D-muramoyl-L-alanyl-D-glutamyl-meso-2,6-diaminopimeloyl-D-alanyl-D-alanine + UDP + H(+). It participates in cell wall biogenesis; peptidoglycan biosynthesis. Cell wall formation. Catalyzes the transfer of a GlcNAc subunit on undecaprenyl-pyrophosphoryl-MurNAc-pentapeptide (lipid intermediate I) to form undecaprenyl-pyrophosphoryl-MurNAc-(pentapeptide)GlcNAc (lipid intermediate II). The polypeptide is UDP-N-acetylglucosamine--N-acetylmuramyl-(pentapeptide) pyrophosphoryl-undecaprenol N-acetylglucosamine transferase (Jannaschia sp. (strain CCS1)).